A 110-amino-acid polypeptide reads, in one-letter code: MTNYLYLAIAIAAEVVATTSLKAVAGFSKPLPLLLVVGGYVLAFSMLVLVMRTLPVGVVYAIWSGLGIVLVSLVAMFVYGQRLDPAALLGIGLIIAGVLVIQLFSRASGH.

Helical transmembrane passes span 7 to 27, 31 to 51, 58 to 78, and 85 to 105; these read LAIA…VAGF, LPLL…VLVM, VVYA…AMFV, and PAAL…QLFS.

Belongs to the drug/metabolite transporter (DMT) superfamily. Small multidrug resistance (SMR) (TC 2.A.7.1) family.

It localises to the cell membrane. Its function is as follows. Confers resistance to ethidium bromide, acriflavine and methyl viologen. The sequence is that of Multidrug transporter PA4990 from Pseudomonas aeruginosa (strain ATCC 15692 / DSM 22644 / CIP 104116 / JCM 14847 / LMG 12228 / 1C / PRS 101 / PAO1).